The chain runs to 372 residues: Chaperone protein DnaJ (372 aa).

In terms of domain architecture, J spans 5–70; sequence DFYEVLGVTK…QKRAAYDRYG (66 aa). A CR-type zinc finger spans residues 129–207; that stretch reads GKLASLTLPT…CGGAGRVTRE (79 aa). Positions 142, 145, 159, 162, 181, 184, 195, and 198 each coordinate Zn(2+). 4 CXXCXGXG motif repeats span residues 142 to 149, 159 to 166, 181 to 188, and 195 to 202; these read CEACDGTG, CPTCGGQG, CPQCHGRG, and CQACGGAG.

It belongs to the DnaJ family. In terms of assembly, homodimer. The cofactor is Zn(2+).

It localises to the cytoplasm. Its function is as follows. Participates actively in the response to hyperosmotic and heat shock by preventing the aggregation of stress-denatured proteins and by disaggregating proteins, also in an autonomous, DnaK-independent fashion. Unfolded proteins bind initially to DnaJ; upon interaction with the DnaJ-bound protein, DnaK hydrolyzes its bound ATP, resulting in the formation of a stable complex. GrpE releases ADP from DnaK; ATP binding to DnaK triggers the release of the substrate protein, thus completing the reaction cycle. Several rounds of ATP-dependent interactions between DnaJ, DnaK and GrpE are required for fully efficient folding. Also involved, together with DnaK and GrpE, in the DNA replication of plasmids through activation of initiation proteins. The protein is Chaperone protein DnaJ of Beijerinckia indica subsp. indica (strain ATCC 9039 / DSM 1715 / NCIMB 8712).